The sequence spans 108 residues: Phosphocarrier protein HPr (108 aa).

Residues 21–108 form the HPr domain; it reads ELQATCIVKN…DAFSSGFGEL (88 aa). His35 functions as the Pros-phosphohistidine intermediate in the catalytic mechanism.

It belongs to the HPr family.

It is found in the cytoplasm. In terms of biological role, general (non sugar-specific) component of the phosphoenolpyruvate-dependent sugar phosphotransferase system (sugar PTS). This major carbohydrate active-transport system catalyzes the phosphorylation of incoming sugar substrates concomitantly with their translocation across the cell membrane. The phosphoryl group from phosphoenolpyruvate (PEP) is transferred to the phosphoryl carrier protein HPr by enzyme I. Phospho-HPr then transfers it to the PTS EIIA domain. In Chlamydia pneumoniae (Chlamydophila pneumoniae), this protein is Phosphocarrier protein HPr (ptsH).